Reading from the N-terminus, the 154-residue chain is Aspartate carbamoyltransferase regulatory chain (154 aa).

Residues Cys-109, Cys-114, Cys-138, and Cys-141 each coordinate Zn(2+).

The protein belongs to the PyrI family. In terms of assembly, contains catalytic and regulatory chains. Zn(2+) is required as a cofactor.

Its function is as follows. Involved in allosteric regulation of aspartate carbamoyltransferase. The polypeptide is Aspartate carbamoyltransferase regulatory chain (Aeromonas salmonicida (strain A449)).